Reading from the N-terminus, the 471-residue chain is Thiohydroximate-O-sulfate sulfur/sulfate-lyase (nitrile-forming) NSP2 (471 aa).

The region spanning 2–144 (VQKVEARGGE…LHSLGAYISS (143 aa)) is the Jacalin-type lectin domain. Kelch repeat units follow at residues 178-226 (KIFS…VRMV), 231-277 (SLYV…SMTA), 281-330 (NVYV…VVQG), 332-379 (VWVV…VVGK), 381-435 (ILVF…GWSA), and 446-471 (GLVMFGGKAQTNDRFGDLFFYGVDSA). Catalysis depends on Arg-238, which acts as the Proton donor. A (Z)-N-(sulfonatooxy)alkanimidothioate is bound by residues Arg-238, Ser-271, Arg-293, Gly-322, and Val-371. Arg-293 acts as the Proton donor in catalysis. Fe(2+) is bound by residues Glu-387, Asp-391, and His-395. Trp-433 lines the a (Z)-N-(sulfonatooxy)alkanimidothioate pocket.

The protein belongs to the jacalin lectin family. The cofactor is Fe(2+). In terms of tissue distribution, expressed only in seeds.

The catalysed reaction is a (Z)-N-(sulfonatooxy)alkanimidothioate = a nitrile + sulfur + sulfate. It catalyses the reaction (Z)-phenyl-N-(sulfonatooxy)methanimidothioate = phenylacetonitrile + sulfur + sulfate. The enzyme catalyses (Z)-N-(sulfonatooxy)prop-2-enimidothioate = but-3-enenitrile + sulfur + sulfate. It carries out the reaction (Z)-(indol-3-yl)-N-(sulfonatooxy)methanimidothioate = (indol-3-yl)acetonitrile + sulfur + sulfate. With respect to regulation, the presence of Fe(2+) supports lyase activity in a dose-dependent manner with both benzylglucosinolate and 2-propenylglucosinolate as substrates. More active at pH 7.4 than at pH 6. Functionally, specifier protein responsible for constitutive and herbivore-induced simple nitrile formation, especially in seeds. Promotes simple nitriles, but not epithionitrile or thiocyanate formation. Converts allylglucosinolate (allyl-GSL), 2-propenylglucosinolate (sinigrin), indol-3-ylmethylglucosinolate (glucobrassicin), benzylisothiocyanate and benzylglucosinolate (glucotropaeolin) to their corresponding simple nitriles in the presence of myrosinase. Catalyzes mainly the conversion of benzylisothiocyanate when benzylglucosinolate is used as the initial substrate of myrosinase. Involved in the regulation of glucosinolate content in seeds, during stratification and germination. The chain is Thiohydroximate-O-sulfate sulfur/sulfate-lyase (nitrile-forming) NSP2 from Arabidopsis thaliana (Mouse-ear cress).